Here is a 471-residue protein sequence, read N- to C-terminus: Ubiquitin-conjugating enzyme E2 variant 3 (471 aa).

The 144-residue stretch at 2–145 (EFDCEGLRRL…QEELPMYSLS (144 aa)) folds into the UEV domain. 191–219 (GELGIACTLAISAKGIADRLVLLDLSEGT) is an NAD(+) binding site.

It in the N-terminal section; belongs to the ubiquitin-conjugating enzyme family. UEV subfamily. This sequence in the C-terminal section; belongs to the LDH/MDH superfamily. In terms of assembly, homodimer. As to expression, colon, colon carcinoma cell lines, normal cervical epithelium, carcinomas of the uterine cervix and peripheral blood leukocytes.

Possible negative regulator of polyubiquitination. The chain is Ubiquitin-conjugating enzyme E2 variant 3 from Homo sapiens (Human).